The primary structure comprises 596 residues: Arginine--tRNA ligase (596 aa).

A 'HIGH' region motif is present at residues 128 to 138; that stretch reads ANPTSSLHVGH.

The protein belongs to the class-I aminoacyl-tRNA synthetase family. As to quaternary structure, monomer.

The protein resides in the cytoplasm. It catalyses the reaction tRNA(Arg) + L-arginine + ATP = L-arginyl-tRNA(Arg) + AMP + diphosphate. In Acinetobacter baylyi (strain ATCC 33305 / BD413 / ADP1), this protein is Arginine--tRNA ligase.